Reading from the N-terminus, the 391-residue chain is Chorismate synthase (391 aa).

Arg-48 is a binding site for NADP(+). Residues 126-128 (RAS), Gly-286, 301-305 (KPTSS), and Arg-328 contribute to the FMN site.

Belongs to the chorismate synthase family. Requires FMNH2 as cofactor.

The enzyme catalyses 5-O-(1-carboxyvinyl)-3-phosphoshikimate = chorismate + phosphate. The protein operates within metabolic intermediate biosynthesis; chorismate biosynthesis; chorismate from D-erythrose 4-phosphate and phosphoenolpyruvate: step 7/7. Functionally, catalyzes the anti-1,4-elimination of the C-3 phosphate and the C-6 proR hydrogen from 5-enolpyruvylshikimate-3-phosphate (EPSP) to yield chorismate, which is the branch point compound that serves as the starting substrate for the three terminal pathways of aromatic amino acid biosynthesis. This reaction introduces a second double bond into the aromatic ring system. This is Chorismate synthase from Saccharolobus islandicus (strain Y.N.15.51 / Yellowstone #2) (Sulfolobus islandicus).